The sequence spans 172 residues: Envelope protein UL45 (172 aa).

Residues 1–27 (MPLRASEHAYRPLGPGTPPVRARLPAA) are Intravirion-facing. The helical; Signal-anchor for type II membrane protein transmembrane segment at 28-48 (AWVGVGTIIGGVVIIAALVLV) threads the bilayer. At 49-172 (PSRASWALSP…TSTRNALGLP (124 aa)) the chain is on the virion surface side.

It belongs to the herpesviridae HHV-1 UL45 family.

It localises to the virion membrane. Functionally, important virulence factor of HSV neurotropism. Seems to be required for glycoprotein B-induced fusion. Dispensable for growth in vitro. This Homo sapiens (Human) protein is Envelope protein UL45.